Reading from the N-terminus, the 156-residue chain is Succinate dehydrogenase [ubiquinone] cytochrome b small subunit 1, mitochondrial (156 aa).

The transit peptide at 1 to 25 directs the protein to the mitochondrion; the sequence is MLSAVRRAIPLSARILRTSLIQRCA. The Mitochondrial matrix segment spans residues 26 to 59; the sequence is GATSAAVTGAAPPQFDPIAAEKGFKPLHSHGTLF. Residues 60–78 traverse the membrane as a helical segment; that stretch reads KIERYFAAAMVPLIPAAYF. The Mitochondrial intermembrane portion of the chain corresponds to 79-83; sequence IHGRE. Residues 84 to 104 traverse the membrane as a helical segment; that stretch reads MDLCLALALTLHVHWGVWGVV. A heme b-binding site is contributed by His95. The Mitochondrial matrix portion of the chain corresponds to 105-119; sequence NDYGRPFVLGDTLAA. Tyr107 serves as a coordination point for a rhodoquinol. A helical transmembrane segment spans residues 120–141; it reads AVRVGAYIFTACLLAGLLYFNE. The Mitochondrial intermembrane portion of the chain corresponds to 142–156; it reads HDVGLTRAFEMVWEL.

The protein belongs to the CybS family. In terms of assembly, component of the mitochondrial electron transport chain complex II composed of four subunits: a flavoprotein (Fp), an iron-sulfur protein (Ip), and a large cytochrome b (CybL) subunit and a small cytochrome b (CybS) subunit. There are 2 developmental stage-specific forms of complex II which have the Ip and CybL subunits in common. Complex II from the free-living larvae (aerobic environment) acts as a succinate dehydrogenase and is composed of the common subunit Ip and CybL and the stage specific subunits FpL and CybSL. Complex II from parasitic larvae and adults (anaerobic environment) acts as a fumarate reductase and is composed of the common subunit Ip and CybL and the stage specific subunits FpA and CybSA. Heme b serves as cofactor. In terms of tissue distribution, expressed in adult muscles (at protein level).

Its subcellular location is the mitochondrion inner membrane. Functionally, membrane-bound small subunit (CybS) of the mitochondrial electron transport chain complex II, which together with the membrane-bound large subunit (CybL), anchor the catalytic subunits to the inner mitochondria membrane. During the parasitic larvae and adult stages, which occur in an anaerobic environment, complex II acts as a fumarate reductase by transferring electrons from rhodoquinol to fumarate. The protein is Succinate dehydrogenase [ubiquinone] cytochrome b small subunit 1, mitochondrial of Ascaris suum (Pig roundworm).